Consider the following 869-residue polypeptide: Probable beta-glucosidase F (869 aa).

An N-terminal signal peptide occupies residues 1 to 19; the sequence is MRVLSAIALVASLASSALS. N-linked (GlcNAc...) asparagine glycosylation is found at asparagine 77 and asparagine 261. Aspartate 289 is a catalytic residue. Asparagine 332, asparagine 364, asparagine 399, and asparagine 478 each carry an N-linked (GlcNAc...) asparagine glycan. Positions 677 to 697 are disordered; sequence STYPPTRPPKGPTPTYPTAIP. Pro residues predominate over residues 681–691; sequence PTRPPKGPTPT. An N-linked (GlcNAc...) asparagine glycan is attached at asparagine 728.

The protein belongs to the glycosyl hydrolase 3 family.

It is found in the secreted. The catalysed reaction is Hydrolysis of terminal, non-reducing beta-D-glucosyl residues with release of beta-D-glucose.. The protein operates within glycan metabolism; cellulose degradation. Functionally, beta-glucosidases are one of a number of cellulolytic enzymes involved in the degradation of cellulosic biomass. Catalyzes the last step releasing glucose from the inhibitory cellobiose. The chain is Probable beta-glucosidase F (bglF) from Aspergillus fumigatus (strain ATCC MYA-4609 / CBS 101355 / FGSC A1100 / Af293) (Neosartorya fumigata).